The following is a 141-amino-acid chain: Hemoglobin subunit alpha-2 (141 aa).

Residues Val1–Arg141 form the Globin domain. His59 contacts O2. Residue His88 participates in heme b binding.

The protein belongs to the globin family. Heterotetramer of two alpha chains and two beta chains. Red blood cells.

In terms of biological role, involved in oxygen transport from the lung to the various peripheral tissues. The chain is Hemoglobin subunit alpha-2 from Torpedo marmorata (Marbled electric ray).